The primary structure comprises 629 residues: Phosphomethylpyrimidine synthase (629 aa).

The interval methionine 1–proline 24 is disordered. Residues glutamate 13–proline 24 are compositionally biased toward polar residues. Substrate-binding positions include asparagine 233, methionine 262, tyrosine 291, histidine 327, serine 347–glycine 349, aspartate 388–arginine 391, and glutamate 427. Residue histidine 431 participates in Zn(2+) binding. Tyrosine 454 is a binding site for substrate. Histidine 495 contributes to the Zn(2+) binding site. 3 residues coordinate [4Fe-4S] cluster: cysteine 575, cysteine 578, and cysteine 583.

Belongs to the ThiC family. As to quaternary structure, homodimer. It depends on [4Fe-4S] cluster as a cofactor.

It carries out the reaction 5-amino-1-(5-phospho-beta-D-ribosyl)imidazole + S-adenosyl-L-methionine = 4-amino-2-methyl-5-(phosphooxymethyl)pyrimidine + CO + 5'-deoxyadenosine + formate + L-methionine + 3 H(+). It functions in the pathway cofactor biosynthesis; thiamine diphosphate biosynthesis. Catalyzes the synthesis of the hydroxymethylpyrimidine phosphate (HMP-P) moiety of thiamine from aminoimidazole ribotide (AIR) in a radical S-adenosyl-L-methionine (SAM)-dependent reaction. This chain is Phosphomethylpyrimidine synthase, found in Pseudomonas syringae pv. tomato (strain ATCC BAA-871 / DC3000).